Here is a 515-residue protein sequence, read N- to C-terminus: Rop guanine nucleotide exchange factor 12 (515 aa).

In terms of domain architecture, PRONE spans 83 to 446 (QARERQLLAD…RAGNKRNTPL (364 aa)). Residue Ser-510 is modified to Phosphoserine.

Interacts (via C-terminus) with PRK2. Interacts with PRK6. Expressed in pollen grains.

The protein resides in the cytoplasm. It is found in the cell membrane. Phosphorylation at Ser-510 by PRK2 may release ROPGEF12 auto-inhibition, thereby activating ROPGEF12 and downstream Rop signaling. Guanine-nucleotide exchange factor (GEF) that acts as an activator of Rop (Rho of plants) GTPases by promoting the exchange of GDP for GTP. May be recruited by PRK2 at the plasma membrane to maintain polar Rop activity in the pollen tube and control polarized pollen tube growth. The chain is Rop guanine nucleotide exchange factor 12 from Arabidopsis thaliana (Mouse-ear cress).